Here is a 33-residue protein sequence, read N- to C-terminus: GVPCSCRGKSGTYWSAGKCPGEHYTTYCNNLIG.

Cysteines 6 and 28 form a disulfide.

It is found in the secreted. Its subcellular location is the nematocyst. The protein is Toxin Bcg III 25.52 of Bunodosoma cangicum (Sea anemone).